A 2104-amino-acid polypeptide reads, in one-letter code: Protein Ycf2 (2104 aa).

1396–1403 contributes to the ATP binding site; sequence GPVETGRS.

This sequence belongs to the Ycf2 family.

Its subcellular location is the plastid. It localises to the chloroplast stroma. In terms of biological role, probable ATPase of unknown function. Its presence in a non-photosynthetic plant (Epifagus virginiana) and experiments in tobacco indicate that it has an essential function which is probably not related to photosynthesis. The sequence is that of Protein Ycf2 (ycf2-A) from Adiantum capillus-veneris (Maidenhair fern).